We begin with the raw amino-acid sequence, 338 residues long: Ketol-acid reductoisomerase (NADP(+)) (338 aa).

Residues 1–181 (MTVYYDKDCN…GGGRTAIIET (181 aa)) enclose the KARI N-terminal Rossmann domain. NADP(+) contacts are provided by residues 24 to 27 (FGSQ), arginine 47, serine 52, and 82 to 85 (DENQ). Residue histidine 107 is part of the active site. Glycine 133 is a binding site for NADP(+). The KARI C-terminal knotted domain maps to 182–327 (TFKDETETDL…VKLRTMMPWI (146 aa)). Positions 190, 194, 226, and 230 each coordinate Mg(2+). Position 251 (serine 251) interacts with substrate.

It belongs to the ketol-acid reductoisomerase family. Mg(2+) serves as cofactor.

It catalyses the reaction (2R)-2,3-dihydroxy-3-methylbutanoate + NADP(+) = (2S)-2-acetolactate + NADPH + H(+). It carries out the reaction (2R,3R)-2,3-dihydroxy-3-methylpentanoate + NADP(+) = (S)-2-ethyl-2-hydroxy-3-oxobutanoate + NADPH + H(+). It functions in the pathway amino-acid biosynthesis; L-isoleucine biosynthesis; L-isoleucine from 2-oxobutanoate: step 2/4. Its pathway is amino-acid biosynthesis; L-valine biosynthesis; L-valine from pyruvate: step 2/4. Functionally, involved in the biosynthesis of branched-chain amino acids (BCAA). Catalyzes an alkyl-migration followed by a ketol-acid reduction of (S)-2-acetolactate (S2AL) to yield (R)-2,3-dihydroxy-isovalerate. In the isomerase reaction, S2AL is rearranged via a Mg-dependent methyl migration to produce 3-hydroxy-3-methyl-2-ketobutyrate (HMKB). In the reductase reaction, this 2-ketoacid undergoes a metal-dependent reduction by NADPH to yield (R)-2,3-dihydroxy-isovalerate. In Sulfurimonas denitrificans (strain ATCC 33889 / DSM 1251) (Thiomicrospira denitrificans (strain ATCC 33889 / DSM 1251)), this protein is Ketol-acid reductoisomerase (NADP(+)).